A 680-amino-acid chain; its full sequence is Coiled-coil domain-containing protein 138 (680 aa).

Position 63 is a phosphothreonine (T63). Position 64 is a phosphoserine (S64). A coiled-coil region spans residues 260-339 (KEQHGTEIEH…YEFMTVQRLK (80 aa)). The segment at 390–410 (EPEEPGVDGGKPPAKPSQRSD) is disordered. At S484 the chain carries Phosphoserine.

This chain is Coiled-coil domain-containing protein 138 (Ccdc138), found in Mus musculus (Mouse).